We begin with the raw amino-acid sequence, 156 residues long: Probable cyclic pyranopterin monophosphate synthase (156 aa).

Substrate is bound by residues 73–75 (LCH) and 109–110 (ME). D124 is a catalytic residue.

This sequence belongs to the MoaC family. As to quaternary structure, homohexamer; trimer of dimers.

The enzyme catalyses (8S)-3',8-cyclo-7,8-dihydroguanosine 5'-triphosphate = cyclic pyranopterin phosphate + diphosphate. It functions in the pathway cofactor biosynthesis; molybdopterin biosynthesis. Catalyzes the conversion of (8S)-3',8-cyclo-7,8-dihydroguanosine 5'-triphosphate to cyclic pyranopterin monophosphate (cPMP). This Pyrococcus furiosus (strain ATCC 43587 / DSM 3638 / JCM 8422 / Vc1) protein is Probable cyclic pyranopterin monophosphate synthase.